We begin with the raw amino-acid sequence, 225 residues long: Enolase-phosphatase E1 (225 aa).

This sequence belongs to the HAD-like hydrolase superfamily. MasA/MtnC family. As to quaternary structure, monomer. Mg(2+) is required as a cofactor.

It catalyses the reaction 5-methylsulfanyl-2,3-dioxopentyl phosphate + H2O = 1,2-dihydroxy-5-(methylsulfanyl)pent-1-en-3-one + phosphate. It participates in amino-acid biosynthesis; L-methionine biosynthesis via salvage pathway; L-methionine from S-methyl-5-thio-alpha-D-ribose 1-phosphate: step 3/6. The protein operates within amino-acid biosynthesis; L-methionine biosynthesis via salvage pathway; L-methionine from S-methyl-5-thio-alpha-D-ribose 1-phosphate: step 4/6. In terms of biological role, bifunctional enzyme that catalyzes the enolization of 2,3-diketo-5-methylthiopentyl-1-phosphate (DK-MTP-1-P) into the intermediate 2-hydroxy-3-keto-5-methylthiopentenyl-1-phosphate (HK-MTPenyl-1-P), which is then dephosphorylated to form the acireductone 1,2-dihydroxy-3-keto-5-methylthiopentene (DHK-MTPene). This is Enolase-phosphatase E1 from Shewanella denitrificans (strain OS217 / ATCC BAA-1090 / DSM 15013).